The primary structure comprises 852 residues: MPANLSSALETFKQQRDAAEAHYLKANRVSVFFREYTAAVETLLAALWAEYFQNSALCLMAVGGFGRGELYPCSDVDLAVVSPAPLSDGIQEQIARFVQTLWDCKLMPSVKSGSVDELCESVRNDITGDTAFLEARFLFGNRQTADKLAEKMNAQRNVAAFVEAKLVEMEHRHAKSQGSGAVLEPNIKSCPGGLRDIHTLLWIAKAQGLATDLPDLLKQRILTRAEAGMLSHGYRRLAHIRIHLHLNAKRAEDRLLFDLQPQVAESMGYEGLNLRRQSEELMRVFYRAIKTVKQLSGILTPMLRSRVSSAPMRVTLRIDDDYIQVNNQIAARHTDIFFRRPEHIFKIVEIMQQRNDITALEPQTLRAWWGATRKINRSFYQNSENRHRFAGFFRNGNGLTQTLRFLNLYGVLGRYLPAWEKIVGLLQHDLFHIYPVDDHILTVVRNVRRLALDMHSHELPYASALMQSFEKQDILYLAAFFHDIAKGRGGDHAIQGIADARQFAADHFLTGEESDLLAWLVENHLLMSAVAQKEDIQDPDVLDAFCKRVQTHERLSALYLLTISDIRGTNPKLWNAWRASLLESLFHAAGRYLTGNGGNPHTLFGRRRQEAADLLTRAAVPEKQQKKLWNALGSAYFARHQSREILWHAANLVHDFETPIVRSRILFKSDSFQVMVFMPNGPRLFARLCRIFSRHGFDILAARAFITEHDYILDTFIVQIPSQHAPEDYPDIQSALEAELNSFIHGHTVAETQSHSRRISRRSRYMPIAPSITITPEEDYPDWYSVEITAVNRPFLLADMAEVFFAHNVSLRYAKISTLDERAEDSFTVFSLDLKNPKIQSSLKQTLLEQLS.

The interval 1–318 (MPANLSSALE…SAPMRVTLRI (318 aa)) is uridylyltransferase. A uridylyl-removing region spans residues 319–672 (DDDYIQVNNQ…SRILFKSDSF (354 aa)). The region spanning 436-558 (VDDHILTVVR…VQTHERLSAL (123 aa)) is the HD domain. ACT domains follow at residues 673–757 (QVMV…SHSR) and 785–852 (SVEI…EQLS).

This sequence belongs to the GlnD family. Mg(2+) is required as a cofactor.

The enzyme catalyses [protein-PII]-L-tyrosine + UTP = [protein-PII]-uridylyl-L-tyrosine + diphosphate. It catalyses the reaction [protein-PII]-uridylyl-L-tyrosine + H2O = [protein-PII]-L-tyrosine + UMP + H(+). Its activity is regulated as follows. Uridylyltransferase (UTase) activity is inhibited by glutamine, while glutamine activates uridylyl-removing (UR) activity. Functionally, modifies, by uridylylation and deuridylylation, the PII regulatory proteins (GlnB and homologs), in response to the nitrogen status of the cell that GlnD senses through the glutamine level. Under low glutamine levels, catalyzes the conversion of the PII proteins and UTP to PII-UMP and PPi, while under higher glutamine levels, GlnD hydrolyzes PII-UMP to PII and UMP (deuridylylation). Thus, controls uridylylation state and activity of the PII proteins, and plays an important role in the regulation of nitrogen assimilation and metabolism. In Neisseria meningitidis serogroup A / serotype 4A (strain DSM 15465 / Z2491), this protein is Bifunctional uridylyltransferase/uridylyl-removing enzyme.